The following is a 147-amino-acid chain: Hemoglobin subunit epsilon (147 aa).

The region spanning 3–147 (HFTAEEKSTI…VATALAHKYH (145 aa)) is the Globin domain. Phosphoserine is present on residues Ser-14 and Ser-51. Heme b is bound by residues His-64 and His-93.

Belongs to the globin family. Heterotetramer of two alpha chains and two epsilon chains in early embryonic hemoglobin Gower-2; two zeta chains and two epsilon chains in early embryonic hemoglobin Gower-1. As to expression, red blood cells.

Its function is as follows. The epsilon chain is a beta-type chain of early mammalian embryonic hemoglobin. In Eulemur fulvus fulvus (Brown lemur), this protein is Hemoglobin subunit epsilon (HBE1).